We begin with the raw amino-acid sequence, 428 residues long: Histone deacetylase 3 (428 aa).

Residues 3–316 form a histone deacetylase region; the sequence is KTVAYFYDPD…WTYETSLLVE (314 aa). Residues His-17, Gly-21, and Lys-25 each coordinate 1D-myo-inositol 1,4,5,6-tetrakisphosphate. The active site involves His-135. Positions 170, 172, and 259 each coordinate Zn(2+). Residue Arg-265 coordinates 1D-myo-inositol 1,4,5,6-tetrakisphosphate. Basic and acidic residues-rich tracts occupy residues 388 to 405 and 415 to 428; these read DRTDEADAEERGPEENYS and DGDHDNDKESDVEI. The tract at residues 388-428 is disordered; the sequence is DRTDEADAEERGPEENYSRPEAPNEFYDGDHDNDKESDVEI. Ser-424 is modified (phosphoserine).

It belongs to the histone deacetylase family. HD type 1 subfamily. Interacts with HDAC7 and HDAC9. Interacts with DAXX, KDM4A, HDAC10 and DACH1. Found in a complex with NCOR1 and NCOR2. Component of the N-Cor repressor complex, at least composed of NCOR1, NCOR2, HDAC3, TBL1X, TBL1R, CORO2A and GPS2. Interacts with BCOR, MJD2A/JHDM3A, NRIP1, PRDM6 and SRY. Interacts with BTBD14B. Interacts with GLIS2. Interacts (via the DNA-binding domain) with NR2C1; the interaction recruits phosphorylated NR2C1 to PML bodies for sumoylation. Component of the Notch corepressor complex. Interacts with CBFA2T3 and NKAP. Interacts with APEX1; the interaction is not dependent on the acetylated status of APEX1. Interacts with ZMYND15. Interacts with SMRT/NCOR2 and BCL6 on DNA enhancer elements. Interacts with INSM1. Interacts with XBP1 isoform 1; the interaction occurs in endothelial cell (EC) under disturbed flow. Interacts (via C-terminus) with CCAR2 (via N-terminus). Interacts with and deacetylates MEF2D. Interacts with BEND3. Interacts with NKAPL. Interacts with DHX36; this interaction occurs in a RNA-dependent manner. Interacts weakly with CRY1; this interaction is enhanced in the presence of FBXL3. Interacts with FBXL3 and BMAL1. Interacts with NCOR1. Interacts with RARA. Interacts with SETD5. In terms of processing, sumoylated in vitro. Deubiquitinated on 'Lys-63'-linked ubiquitin chains by USP38; leading to a decreased level of histone acetylation.

Its subcellular location is the nucleus. It localises to the chromosome. The protein localises to the cytoplasm. It is found in the cytosol. The enzyme catalyses N(6)-acetyl-L-lysyl-[histone] + H2O = L-lysyl-[histone] + acetate. It catalyses the reaction N(6)-acetyl-L-lysyl-[protein] + H2O = L-lysyl-[protein] + acetate. It carries out the reaction N(6)-(2E)-butenoyl-L-lysyl-[protein] + H2O = (2E)-2-butenoate + L-lysyl-[protein]. The catalysed reaction is N(6)-(2-hydroxyisobutanoyl)-L-lysyl-[protein] + H2O = 2-hydroxy-2-methylpropanoate + L-lysyl-[protein]. The enzyme catalyses N(6)-[(S)-lactoyl]-L-lysyl-[protein] + H2O = (S)-lactate + L-lysyl-[protein]. Inositol tetraphosphate (1D-myo-inositol 1,4,5,6-tetrakisphosphate) promotes the histone deacetylase activity by acting as an intermolecular glue between HDAC3 and NCOR2, thereby promoting its association with the N-Cor complex, a prerequisite for the histone deacetylase activity. In terms of biological role, histone deacetylase that catalyzes the deacetylation of lysine residues on the N-terminal part of the core histones (H2A, H2B, H3 and H4), and some other non-histone substrates. Histone deacetylation gives a tag for epigenetic repression and plays an important role in transcriptional regulation, cell cycle progression and developmental events. Histone deacetylases act via the formation of large multiprotein complexes, such as N-Cor repressor complex, which activate the histone deacetylase activity. Participates in the BCL6 transcriptional repressor activity by deacetylating the H3 'Lys-27' (H3K27) on enhancer elements, antagonizing EP300 acetyltransferase activity and repressing proximal gene expression. Acts as a molecular chaperone for shuttling phosphorylated NR2C1 to PML bodies for sumoylation. Contributes, together with XBP1 isoform 1, to the activation of NFE2L2-mediated HMOX1 transcription factor gene expression in a PI(3)K/mTORC2/Akt-dependent signaling pathway leading to endothelial cell (EC) survival under disturbed flow/oxidative stress. Regulates both the transcriptional activation and repression phases of the circadian clock in a deacetylase activity-independent manner. During the activation phase, promotes the accumulation of ubiquitinated BMAL1 at the E-boxes and during the repression phase, blocks FBXL3-mediated CRY1/2 ubiquitination and promotes the interaction of CRY1 and BMAL1. The NCOR1-HDAC3 complex regulates the circadian expression of the core clock gene BMAL1 and the genes involved in lipid metabolism in the liver. Also functions as deacetylase for non-histone targets, such as KAT5, MEF2D, MAPK14, RARA and STAT3. Serves as a corepressor of RARA, mediating its deacetylation and repression, leading to inhibition of RARE DNA element binding. In addition to protein deacetylase activity, also acts as a protein-lysine deacylase by recognizing other acyl groups: catalyzes removal of (2E)-butenoyl (crotonyl), lactoyl (lactyl) and 2-hydroxyisobutanoyl (2-hydroxyisobutyryl) acyl groups from lysine residues, leading to protein decrotonylation, delactylation and de-2-hydroxyisobutyrylation, respectively. Catalyzes decrotonylation of MAPRE1/EB1. Mediates delactylation NBN/NBS1, thereby inhibiting DNA double-strand breaks (DSBs) via homologous recombination (HR). In Mus musculus (Mouse), this protein is Histone deacetylase 3.